The following is a 343-amino-acid chain: MSAFTPASEVLLRHSDDFEQSRILFAGDLQDDLPARLDTAASRAHTQQFHHWQVLSRQMGDNARFSLVATADDVADCDTLIYYWPKNKPEAQFQLMNLLSLLPVGTDIFVVGENRSGVRSAEQMLADYAPLNKVDSARRCGLYFGRLEKQPVFDADKFWGEYSVDGLTVKTLPGVFSRDGLDVGSQLLLSTLTPHTKGKVLDVGCGAGVLSVAFARHSPKIRLTLCDVSAPAVEASRATLAANCVEGEVFASNVFSEVKGRFDMIISNPPFHDGMQTSLDAAQTLIRGAVRHLNSGGELRIVANAFLPYPDVLDETFGFHEVIAQTGRFKVYRAIMTRQAKKG.

Belongs to the methyltransferase superfamily. RsmC family. In terms of assembly, monomer.

Its subcellular location is the cytoplasm. It catalyses the reaction guanosine(1207) in 16S rRNA + S-adenosyl-L-methionine = N(2)-methylguanosine(1207) in 16S rRNA + S-adenosyl-L-homocysteine + H(+). Its function is as follows. Specifically methylates the guanine in position 1207 of 16S rRNA in the 30S particle. The chain is Ribosomal RNA small subunit methyltransferase C from Escherichia coli O8 (strain IAI1).